Consider the following 945-residue polypeptide: Splicing factor, suppressor of white-apricot homolog (945 aa).

2 disordered regions span residues 1-28 (MYGA…GTGT) and 157-190 (YYDP…PFIA). Composition is skewed to basic and acidic residues over residues 9–21 (AKAE…KEEA) and 169–178 (PSKQREKSEA). The SURP motif 1 repeat unit spans residues 211–253 (IIERTANFVCKQGAQFEIMLKAKQARNSQFDFLRFDHYLNPYY). Residues 269–298 (AESKSEEKKKSGPTSDNEEEDDEEDGSYLH) form a disordered region. S283 carries the phosphoserine modification. The segment covering 284–294 (DNEEEDDEEDG) has biased composition (acidic residues). K315 carries the post-translational modification N6-acetyllysine. 2 disordered regions span residues 332–355 (KAQA…PSQV) and 403–438 (SSSP…STTT). Over residues 335–352 (ADSSAPAPPTADGTPAQP) the composition is skewed to low complexity. Positions 412–425 (VPPPPGTTPPPPPT) are enriched in pro residues. Low complexity predominate over residues 426–438 (TAESSSGVTSTTT). The stretch at 458–498 (VIDKLAEYVARNGLKFETSVRAKNDQRFEFLQPWHQYNAYY) is one SURP motif 2 repeat. 3 disordered regions span residues 512 to 566 (GSTQ…TVDG), 589 to 680 (PLEK…QAER), and 714 to 921 (GVMP…VQSK). Residues 514-527 (TQAASTAEEAPTET) show a composition bias toward low complexity. A compositionally biased stretch (acidic residues) spans 528-540 (AVEESSEAGEDGA). Basic and acidic residues predominate over residues 589–598 (PLEKNRVKLD). 2 positions are modified to phosphoserine: S601 and S621. The span at 615–630 (SSVANPSPAAAPPSAV) shows a compositional bias: low complexity. Residues 632 to 686 (EEKKPQLTQEELEAKQAKQKLEDRLAAAAREKLAQASKESKEKQLQAERKRKAAL) are a coiled coil. T639 is modified (phosphothreonine). Composition is skewed to basic and acidic residues over residues 643–679 (LEAK…LQAE) and 733–752 (KPPE…EERE). Composition is skewed to basic residues over residues 753–787 (KKKK…KAKH) and 795–810 (TVRR…RRRA). The segment covering 811 to 821 (HSPERRREDRS) has biased composition (basic and acidic residues). 2 positions are modified to phosphoserine: S829 and S831. Basic residues predominate over residues 835 to 861 (SRKRTRSRSPHEKKKKRRSRSRTKAKA). The span at 871–894 (QAAQRPSAHSAHSASISPVESRGS) shows a compositional bias: low complexity. The segment covering 895 to 908 (SQERSRGVSQEKDG) has biased composition (basic and acidic residues). S899 and S903 each carry phosphoserine. Over residues 909–920 (QISSAIVSSVQS) the composition is skewed to low complexity.

The protein resides in the nucleus. In terms of biological role, plays a role as an alternative splicing regulator. Regulate its own expression at the level of RNA processing. Also regulates the splicing of fibronectin and CD45 genes. May act, at least in part, by interaction with other R/S-containing splicing factors. Represses the splicing of MAPT/Tau exon 10. The protein is Splicing factor, suppressor of white-apricot homolog (Sfswap) of Rattus norvegicus (Rat).